A 59-amino-acid polypeptide reads, in one-letter code: Photosystem II reaction center protein K (59 aa).

A propeptide spanning residues 1-22 is cleaved from the precursor; it reads MLNIFSLICLNSDLYSSRFFLA. The helical transmembrane segment at 38–58 threads the bilayer; that stretch reads MPVIPLFFLLLAFVWQAAVSF.

Belongs to the PsbK family. As to quaternary structure, PSII is composed of 1 copy each of membrane proteins PsbA, PsbB, PsbC, PsbD, PsbE, PsbF, PsbH, PsbI, PsbJ, PsbK, PsbL, PsbM, PsbT, PsbX, PsbY, PsbZ, Psb30/Ycf12, at least 3 peripheral proteins of the oxygen-evolving complex and a large number of cofactors. It forms dimeric complexes.

The protein resides in the plastid. It is found in the chloroplast thylakoid membrane. Functionally, one of the components of the core complex of photosystem II (PSII). PSII is a light-driven water:plastoquinone oxidoreductase that uses light energy to abstract electrons from H(2)O, generating O(2) and a proton gradient subsequently used for ATP formation. It consists of a core antenna complex that captures photons, and an electron transfer chain that converts photonic excitation into a charge separation. This is Photosystem II reaction center protein K from Oenothera elata subsp. hookeri (Hooker's evening primrose).